Here is a 72-residue protein sequence, read N- to C-terminus: Translation initiation factor IF-1 (72 aa).

One can recognise an S1-like domain in the interval 1–72 (MAKEGAIEVE…TRGRIVYRYK (72 aa)).

It belongs to the IF-1 family. Component of the 30S ribosomal translation pre-initiation complex which assembles on the 30S ribosome in the order IF-2 and IF-3, IF-1 and N-formylmethionyl-tRNA(fMet); mRNA recruitment can occur at any time during PIC assembly.

The protein resides in the cytoplasm. One of the essential components for the initiation of protein synthesis. Stabilizes the binding of IF-2 and IF-3 on the 30S subunit to which N-formylmethionyl-tRNA(fMet) subsequently binds. Helps modulate mRNA selection, yielding the 30S pre-initiation complex (PIC). Upon addition of the 50S ribosomal subunit IF-1, IF-2 and IF-3 are released leaving the mature 70S translation initiation complex. In Corynebacterium diphtheriae (strain ATCC 700971 / NCTC 13129 / Biotype gravis), this protein is Translation initiation factor IF-1.